We begin with the raw amino-acid sequence, 209 residues long: Large ribosomal subunit protein uL3 (209 aa).

Gln150 bears the N5-methylglutamine mark.

This sequence belongs to the universal ribosomal protein uL3 family. Part of the 50S ribosomal subunit. Forms a cluster with proteins L14 and L19. In terms of processing, methylated by PrmB.

Functionally, one of the primary rRNA binding proteins, it binds directly near the 3'-end of the 23S rRNA, where it nucleates assembly of the 50S subunit. The protein is Large ribosomal subunit protein uL3 of Pasteurella multocida (strain Pm70).